We begin with the raw amino-acid sequence, 355 residues long: Uroporphyrinogen decarboxylase (355 aa).

Residues 27–31 (RQAGR), Asp-77, Tyr-154, Thr-209, and His-327 contribute to the substrate site.

This sequence belongs to the uroporphyrinogen decarboxylase family. In terms of assembly, homodimer.

It localises to the cytoplasm. It catalyses the reaction uroporphyrinogen III + 4 H(+) = coproporphyrinogen III + 4 CO2. The protein operates within porphyrin-containing compound metabolism; protoporphyrin-IX biosynthesis; coproporphyrinogen-III from 5-aminolevulinate: step 4/4. In terms of biological role, catalyzes the decarboxylation of four acetate groups of uroporphyrinogen-III to yield coproporphyrinogen-III. This is Uroporphyrinogen decarboxylase from Yersinia enterocolitica serotype O:8 / biotype 1B (strain NCTC 13174 / 8081).